Reading from the N-terminus, the 239-residue chain is Lipoprotein-releasing system ATP-binding protein LolD (239 aa).

The 231-residue stretch at 9–239 folds into the ABC transporter domain; sequence LQVQHVSKHY…AATSPTGLAE (231 aa). 45–52 lines the ATP pocket; the sequence is GSSGSGKS.

Belongs to the ABC transporter superfamily. Lipoprotein translocase (TC 3.A.1.125) family. As to quaternary structure, the complex is composed of two ATP-binding proteins (LolD) and two transmembrane proteins (LolC and LolE).

The protein localises to the cell inner membrane. Part of the ABC transporter complex LolCDE involved in the translocation of mature outer membrane-directed lipoproteins, from the inner membrane to the periplasmic chaperone, LolA. Responsible for the formation of the LolA-lipoprotein complex in an ATP-dependent manner. This Shewanella frigidimarina (strain NCIMB 400) protein is Lipoprotein-releasing system ATP-binding protein LolD.